The chain runs to 211 residues: Peptide methionine sulfoxide reductase MsrA (211 aa).

Cysteine 52 is an active-site residue.

The protein belongs to the MsrA Met sulfoxide reductase family.

It carries out the reaction L-methionyl-[protein] + [thioredoxin]-disulfide + H2O = L-methionyl-(S)-S-oxide-[protein] + [thioredoxin]-dithiol. The enzyme catalyses [thioredoxin]-disulfide + L-methionine + H2O = L-methionine (S)-S-oxide + [thioredoxin]-dithiol. Functionally, has an important function as a repair enzyme for proteins that have been inactivated by oxidation. Catalyzes the reversible oxidation-reduction of methionine sulfoxide in proteins to methionine. The sequence is that of Peptide methionine sulfoxide reductase MsrA from Photobacterium profundum (strain SS9).